A 175-amino-acid chain; its full sequence is MTTIVSVRRKGQVVVGGDGQVSLGNTVMKGNARKVRRLYNGKVLTGFAGGTADAFTLFELFERKLEMHQGHLLKSAVELAKEWRTDRALRRLEAMLIVADKTESLIITGNGDVVQPEEDQILAIGSGGNYALSAARALVENTDLSAREIVEKSLKIAGDICVFTNLTHTIEELSE.

Residue threonine 2 is part of the active site. Na(+) is bound by residues glycine 158, cysteine 161, and threonine 164.

The protein belongs to the peptidase T1B family. HslV subfamily. As to quaternary structure, a double ring-shaped homohexamer of HslV is capped on each side by a ring-shaped HslU homohexamer. The assembly of the HslU/HslV complex is dependent on binding of ATP.

It localises to the cytoplasm. The enzyme catalyses ATP-dependent cleavage of peptide bonds with broad specificity.. Allosterically activated by HslU binding. Functionally, protease subunit of a proteasome-like degradation complex believed to be a general protein degrading machinery. In Histophilus somni (strain 129Pt) (Haemophilus somnus), this protein is ATP-dependent protease subunit HslV.